A 419-amino-acid chain; its full sequence is UPF0761 membrane protein ACIAD3168 (419 aa).

A run of 6 helical transmembrane segments spans residues 42–62 (ALTY…LVII), 105–125 (LTVI…STIE), 148–168 (WTII…SSTV), 186–206 (AFIL…ILYW), 212–232 (TVPM…FELL), and 252–272 (AFAA…IVLL).

This sequence belongs to the UPF0761 family.

The protein localises to the cell inner membrane. This chain is UPF0761 membrane protein ACIAD3168, found in Acinetobacter baylyi (strain ATCC 33305 / BD413 / ADP1).